A 376-amino-acid polypeptide reads, in one-letter code: MLNFELLTTDGNARRGRVTLNHGVVETPIFMPVGTYGSVKAMSPLELNEIGAQIILGNTFHLWLRPGLDVVDTHAGLHKFIGWDKPILTDSGGFQVFSLGELRKITEEGVTFASPVNGDKLFLSPEISMQIQRTLNSDIVMQFDECTPYEIDGRPATHDEAARSMRMSLRWAKRSRDEFDHLANPNALFGIVQGGMFEDLRDESLAGLSELDFHGYAIGGLSVGEPKEDMMRVLEHVGPRLPAHKPHYLMGVGTPEDLVAGVAHGVDMFDCVMPTRNARNGWLFTRFGDVKIRNAAHRNDPRPLDEQCGCYTCRNFSRAYLHHLHRVGEILGARLNTIHNLYYYLELMREMRTAIEEHRFEAFRRQFAENRARGTR.

Catalysis depends on Asp90, which acts as the Proton acceptor. Substrate-binding positions include 90-94 (DSGGF), Asp144, Gln193, and Gly220. The RNA binding stretch occupies residues 251 to 257 (GVGTPED). Asp270 functions as the Nucleophile in the catalytic mechanism. Positions 275 to 279 (TRNAR) are RNA binding; important for wobble base 34 recognition. Residues Cys308, Cys310, Cys313, and His339 each coordinate Zn(2+).

This sequence belongs to the queuine tRNA-ribosyltransferase family. As to quaternary structure, homodimer. Within each dimer, one monomer is responsible for RNA recognition and catalysis, while the other monomer binds to the replacement base PreQ1. Zn(2+) serves as cofactor.

It carries out the reaction 7-aminomethyl-7-carbaguanine + guanosine(34) in tRNA = 7-aminomethyl-7-carbaguanosine(34) in tRNA + guanine. It functions in the pathway tRNA modification; tRNA-queuosine biosynthesis. In terms of biological role, catalyzes the base-exchange of a guanine (G) residue with the queuine precursor 7-aminomethyl-7-deazaguanine (PreQ1) at position 34 (anticodon wobble position) in tRNAs with GU(N) anticodons (tRNA-Asp, -Asn, -His and -Tyr). Catalysis occurs through a double-displacement mechanism. The nucleophile active site attacks the C1' of nucleotide 34 to detach the guanine base from the RNA, forming a covalent enzyme-RNA intermediate. The proton acceptor active site deprotonates the incoming PreQ1, allowing a nucleophilic attack on the C1' of the ribose to form the product. After dissociation, two additional enzymatic reactions on the tRNA convert PreQ1 to queuine (Q), resulting in the hypermodified nucleoside queuosine (7-(((4,5-cis-dihydroxy-2-cyclopenten-1-yl)amino)methyl)-7-deazaguanosine). The polypeptide is Queuine tRNA-ribosyltransferase (Cupriavidus metallidurans (strain ATCC 43123 / DSM 2839 / NBRC 102507 / CH34) (Ralstonia metallidurans)).